The following is a 443-amino-acid chain: Leucine/methionine racemase (443 aa).

Residues 110-111 (GS) and Q247 each bind pyridoxal 5'-phosphate. K273 is subject to N6-(pyridoxal phosphate)lysine. A pyridoxal 5'-phosphate-binding site is contributed by T302.

It belongs to the class-III pyridoxal-phosphate-dependent aminotransferase family. Pyridoxal 5'-phosphate serves as cofactor.

The catalysed reaction is L-leucine = D-leucine. It carries out the reaction L-methionine = D-methionine. Activity is strongly inhibited by several metal ions, including Co(2+), Zn(2+), Ni(2+), Cu(2+) and Fe(3+), and nonsubstrate amino acids such as L-arginine and L-lysine. Activity is completely abolished in the presence of hydroxylamine, an inhibitor of pyridoxal phosphate-dependent enzymes. Functionally, amino acid racemase with moderate substrate specificity. Is primarily active toward leucine, which is the preferred substrate, and methionine. Also exhibits lower levels of activity toward phenylalanine, alanine and serine. This chain is Leucine/methionine racemase, found in Thermococcus litoralis (strain ATCC 51850 / DSM 5473 / JCM 8560 / NS-C).